We begin with the raw amino-acid sequence, 92 residues long: MPLHKSAEKRLRQAARRNERNRARKKELKGVLKNMQKLIDANAAKSEVEAAYKAAVQKLDRLGVKRYIHPNKASRKKAQLTKALNNYTPTAS.

Residues 1 to 21 (MPLHKSAEKRLRQAARRNERN) show a composition bias toward basic and acidic residues. Disordered stretches follow at residues 1-26 (MPLHKSAEKRLRQAARRNERNRARKK) and 73-92 (ASRKKAQLTKALNNYTPTAS). Polar residues predominate over residues 82-92 (KALNNYTPTAS).

This sequence belongs to the bacterial ribosomal protein bS20 family.

Binds directly to 16S ribosomal RNA. This Chlorobaculum tepidum (strain ATCC 49652 / DSM 12025 / NBRC 103806 / TLS) (Chlorobium tepidum) protein is Small ribosomal subunit protein bS20.